The sequence spans 594 residues: Actin-histidine N-methyltransferase (594 aa).

Residues 1–23 (MGKKSRVKTQKSGTGATASVSPK) form a disordered region. Positions 10 to 23 (QKSGTGATASVSPK) are enriched in polar residues. S-adenosyl-L-methionine is bound by residues Arg-75, 104-106 (EGF), Arg-254, 275-279 (DMCNH), and 325-327 (SGF). One can recognise an SET domain in the interval 94-314 (EGFEMVSFKE…AGEQIYIFYG (221 aa)). The interval 553–594 (INGENSIPNGTRLEKEDLNQEQSKRVTEDAKEPSDSTEEVKE) is disordered. Positions 564-594 (RLEKEDLNQEQSKRVTEDAKEPSDSTEEVKE) are enriched in basic and acidic residues.

Belongs to the class V-like SAM-binding methyltransferase superfamily. SETD3 actin-histidine methyltransferase family. In terms of assembly, interacts with MYOD1. Post-translationally, phosphorylated by GSK3B, which is required for recognition by the SCF(FBXW7) complex and subsequent degradation. Ubiquitinated by the SCF(FBXW7) complex following phosphorylation by GSK3B, leading to its degradation by the proteasome.

Its subcellular location is the cytoplasm. It localises to the nucleus. It catalyses the reaction L-histidyl-[protein] + S-adenosyl-L-methionine = N(tele)-methyl-L-histidyl-[protein] + S-adenosyl-L-homocysteine + H(+). Protein-histidine N-methyltransferase that specifically mediates 3-methylhistidine (tele-methylhistidine) methylation of actin at 'His-73'. Histidine methylation of actin is required for smooth muscle contraction of the laboring uterus during delivery. Does not have protein-lysine N-methyltransferase activity and probably only catalyzes histidine methylation of actin. In Rhinolophus ferrumequinum (Greater horseshoe bat), this protein is Actin-histidine N-methyltransferase.